A 334-amino-acid chain; its full sequence is rRNA 2'-O-methyltransferase fibrillarin (334 aa).

Positions 1-93 are enriched in gly residues; sequence MEGRGGSRGG…GGKPAAGGKP (93 aa). Residues 1–94 form a disordered region; that stretch reads MEGRGGSRGG…GKPAAGGKPG (94 aa). Residues 184-185, 203-204, 228-229, and 248-251 contribute to the S-adenosyl-L-methionine site; these read TT, EL, DA, and DVAQ.

Belongs to the methyltransferase superfamily. Fibrillarin family. Component of box C/D small nucleolar ribonucleoprotein (snoRNP) particles. It is associated with the U3, U8 and U13 small nuclear RNAs. Part of the small subunit (SSU) processome, composed of more than 70 proteins and the RNA chaperone small nucleolar RNA (snoRNA) U3. In terms of processing, by homology to other fibrillarins, some or all of the N-terminal domain arginines are modified to asymmetric dimethylarginine (DMA).

It is found in the nucleus. The protein resides in the nucleolus. It catalyses the reaction L-glutaminyl-[histone H2A] + S-adenosyl-L-methionine = N(5)-methyl-L-glutaminyl-[histone H2A] + S-adenosyl-L-homocysteine + H(+). Its function is as follows. S-adenosyl-L-methionine-dependent methyltransferase that has the ability to methylate both RNAs and proteins. Involved in pre-rRNA processing. Utilizes the methyl donor S-adenosyl-L-methionine to catalyze the site-specific 2'-hydroxyl methylation of ribose moieties in pre-ribosomal RNA. Site specificity is provided by a guide RNA that base pairs with the substrate. Methylation occurs at a characteristic distance from the sequence involved in base pairing with the guide RNA. Also acts as a protein methyltransferase by mediating methylation of 'Gln-105' of histone H2A (H2AQ105me), a modification that impairs binding of the FACT complex and is specifically present at 35S ribosomal DNA locus. Part of the small subunit (SSU) processome, first precursor of the small eukaryotic ribosomal subunit. During the assembly of the SSU processome in the nucleolus, many ribosome biogenesis factors, an RNA chaperone and ribosomal proteins associate with the nascent pre-rRNA and work in concert to generate RNA folding, modifications, rearrangements and cleavage as well as targeted degradation of pre-ribosomal RNA by the RNA exosome. The polypeptide is rRNA 2'-O-methyltransferase fibrillarin (fbl) (Dictyostelium discoideum (Social amoeba)).